Consider the following 2288-residue polypeptide: Protein Ycf2 (2288 aa).

1629–1636 is an ATP binding site; that stretch reads GSIGTGRS.

Belongs to the Ycf2 family.

The protein resides in the plastid. It localises to the chloroplast stroma. In terms of biological role, probable ATPase of unknown function. Its presence in a non-photosynthetic plant (Epifagus virginiana) and experiments in tobacco indicate that it has an essential function which is probably not related to photosynthesis. This chain is Protein Ycf2, found in Phaseolus vulgaris (Kidney bean).